A 173-amino-acid polypeptide reads, in one-letter code: RNA pyrophosphohydrolase (173 aa).

One can recognise a Nudix hydrolase domain in the interval 6–149 (GFRANVGIIL…KRGVYRRALQ (144 aa)). The Nudix box motif lies at 38 to 59 (GGIDRGETPMDAMYRELWEEVG).

It belongs to the Nudix hydrolase family. RppH subfamily. It depends on a divalent metal cation as a cofactor.

Accelerates the degradation of transcripts by removing pyrophosphate from the 5'-end of triphosphorylated RNA, leading to a more labile monophosphorylated state that can stimulate subsequent ribonuclease cleavage. The chain is RNA pyrophosphohydrolase from Psychrobacter arcticus (strain DSM 17307 / VKM B-2377 / 273-4).